The sequence spans 676 residues: Envelope fusion protein (676 aa).

The first 16 residues, methionine 1 to alanine 16, serve as a signal peptide directing secretion. N-linked (GlcNAc...) asparagine; by host glycans are attached at residues asparagine 76 and asparagine 87. A coiled-coil region spans residues alanine 169–glycine 215. 4 N-linked (GlcNAc...) asparagine; by host glycosylation sites follow: asparagine 266, asparagine 469, asparagine 505, and asparagine 548. Residues cysteine 577 to phenylalanine 597 traverse the membrane as a helical segment. Asparagine 628 is a glycosylation site (N-linked (GlcNAc...) asparagine; by host).

Post-translationally, N-glycosylated.

It localises to the virion membrane. The protein localises to the host cell membrane. Functionally, envelope glycoprotein which mediates the fusion of viral and host endosomal membranes leading to virus entry into the host cell. The sequence is that of Envelope fusion protein from Lepidoptera (butterflies and moths).